The chain runs to 385 residues: Glutamate 5-kinase (385 aa).

ATP is bound at residue K17. Substrate contacts are provided by S64, D151, and N165. 185-186 (SD) contributes to the ATP binding site. The 77-residue stretch at 291 to 367 (SGTVRVDAGA…DQIENVLGYS (77 aa)) folds into the PUA domain.

Belongs to the glutamate 5-kinase family.

The protein resides in the cytoplasm. The enzyme catalyses L-glutamate + ATP = L-glutamyl 5-phosphate + ADP. Its pathway is amino-acid biosynthesis; L-proline biosynthesis; L-glutamate 5-semialdehyde from L-glutamate: step 1/2. Its function is as follows. Catalyzes the transfer of a phosphate group to glutamate to form L-glutamate 5-phosphate. In Methanosarcina mazei (strain ATCC BAA-159 / DSM 3647 / Goe1 / Go1 / JCM 11833 / OCM 88) (Methanosarcina frisia), this protein is Glutamate 5-kinase.